The sequence spans 495 residues: Protein SLENDER RICE1-LIKE 1 (495 aa).

A GRAS domain is found at 77–449 (EEEEVAGIRL…RPLFSASAWE (373 aa)). A leucine repeat I (LRI) region spans residues 84–140 (IRLVHLLMSCAGAIEAGDHALASAQLADSHAALAAVSAASGIGRVAVHFTTALSRRL). The segment at 158–223 (YHHFYEACPY…GGPPFLRITG (66 aa)) is VHIID. A VHIID motif is present at residues 189 to 193 (VHVID). The tract at residues 237 to 269 (DVGLRLADLARSVRVRFSFRGVAANSLDEVRPW) is leucine repeat II (LRII). The tract at residues 279–371 (VAFNSVLQLH…EAYLQREICD (93 aa)) is PFYRE. Residues 287 to 291 (LHRLL) carry the LXXLL motif motif. The tract at residues 374–449 (CGEGAARRER…RPLFSASAWE (76 aa)) is SAW. The segment at 451–495 (AGDGGGDNNNNSNSNVSGSSGSDSNNSGSSNGKSSGARDGSSVCL) is disordered. A compositionally biased stretch (low complexity) spans 458–485 (NNNNSNSNVSGSSGSDSNNSGSSNGKSS).

It belongs to the GRAS family. In terms of tissue distribution, expressed in elongating internodes and flowers. Expressed in floral meristem, stamen primordia and tapetum in developing anthers. Expressed at low levels in roots, shoot apices and rachis.

The protein localises to the nucleus. In terms of biological role, probable transcriptional regulator that acts as a repressor of the gibberellin (GA) signaling pathway. Its repressive activity is weaker than that of SLR1. Its overexpression prevents the GA signaling pathway and induces a dwarf phenotype. The protein is Protein SLENDER RICE1-LIKE 1 of Oryza sativa subsp. japonica (Rice).